A 42-amino-acid chain; its full sequence is Photosystem I reaction center subunit IX (42 aa).

Residues Y7–I27 form a helical membrane-spanning segment.

It belongs to the PsaJ family.

The protein localises to the plastid membrane. Functionally, may help in the organization of the PsaE and PsaF subunits. The protein is Photosystem I reaction center subunit IX of Cuscuta reflexa (Southern Asian dodder).